Here is a 21-residue protein sequence, read N- to C-terminus: Venom nerve growth factor Bco12 (21 aa).

Belongs to the NGF-beta family. Homodimer; non-covalently linked. Post-translationally, glycosylated. In terms of tissue distribution, expressed by the venom gland.

Its subcellular location is the secreted. Nerve growth factor is important for the development and maintenance of the sympathetic and sensory nervous systems. It stimulates division and differentiation of sympathetic and embryonic sensory neurons as well as basal forebrain cholinergic neurons in the brain. Its relevance in the snake venom is not clear. However, it has been shown to inhibit metalloproteinase-dependent proteolysis of platelet glycoprotein Ib alpha, suggesting a metalloproteinase inhibition to prevent metalloprotease autodigestion and/or protection against prey proteases. Binds a lipid between the two protein chains in the homodimer. The lipid-bound form promotes histamine relase from mouse mast cells, contrary to the lipid-free form. This Bothrops cotiara (Cotiara) protein is Venom nerve growth factor Bco12.